Reading from the N-terminus, the 104-residue chain is Secretoglobin family 3A member 1 (104 aa).

The first 21 residues, 1–21 (MKLTTTFLVLCVALLSDSGVA), serve as a signal peptide directing secretion.

It belongs to the secretoglobin family. UGRP subfamily. In terms of assembly, homodimer; disulfide-linked. Highly expressed in lung, where it localizes to epithelial cells lining the trachea and bronchi. Expression in lung is mainly restricted to bronchi, submucosal glands of the trachea, and tracheal epithelium, with little expression in terminal bronchioles. Expressed in uterus where it localizes to epithelial cells of the uterine glands. Also detected in heart, stomach and small intestine.

The protein resides in the secreted. Its function is as follows. Secreted cytokine-like protein. Inhibits cell growth in vitro. The sequence is that of Secretoglobin family 3A member 1 (Scgb3a1) from Mus musculus (Mouse).